The sequence spans 305 residues: Ribosomal RNA small subunit methyltransferase H (305 aa).

Residues 46–48, aspartate 65, phenylalanine 92, aspartate 108, and histidine 115 each bind S-adenosyl-L-methionine; that span reads GGH.

Belongs to the methyltransferase superfamily. RsmH family.

It localises to the cytoplasm. It catalyses the reaction cytidine(1402) in 16S rRNA + S-adenosyl-L-methionine = N(4)-methylcytidine(1402) in 16S rRNA + S-adenosyl-L-homocysteine + H(+). Functionally, specifically methylates the N4 position of cytidine in position 1402 (C1402) of 16S rRNA. The chain is Ribosomal RNA small subunit methyltransferase H from Trichormus variabilis (strain ATCC 29413 / PCC 7937) (Anabaena variabilis).